The sequence spans 100 residues: MAKKCWIQREKKRQKLEQKYRLIRRSSKKEIREVTSLSEKWEIQRKLQSSPRNSAPTRLRRRCFSTGRPRATYRDFGLSRHILLKMFRAGLLPGATRSSW.

This sequence belongs to the universal ribosomal protein uS14 family. Part of the 30S ribosomal subunit.

It is found in the plastid. Its subcellular location is the chloroplast. In terms of biological role, binds 16S rRNA, required for the assembly of 30S particles. This Pelargonium hortorum (Common geranium) protein is Small ribosomal subunit protein uS14c.